Here is a 327-residue protein sequence, read N- to C-terminus: L-lactate dehydrogenase (327 aa).

Residues valine 18, aspartate 39, lysine 44, tyrosine 69, and 83–84 (GA) contribute to the NAD(+) site. Residues glutamine 86, arginine 92, and 124 to 127 (NPVD) each bind substrate. NAD(+) contacts are provided by residues 122–124 (AAN) and serine 147. 152 to 155 (DSAR) serves as a coordination point for substrate. Beta-D-fructose 1,6-bisphosphate is bound by residues arginine 157 and histidine 172. Histidine 179 functions as the Proton acceptor in the catalytic mechanism. Position 224 is a phosphotyrosine (tyrosine 224). Threonine 233 contacts substrate.

This sequence belongs to the LDH/MDH superfamily. LDH family. Homotetramer.

The protein localises to the cytoplasm. It catalyses the reaction (S)-lactate + NAD(+) = pyruvate + NADH + H(+). The protein operates within fermentation; pyruvate fermentation to lactate; (S)-lactate from pyruvate: step 1/1. With respect to regulation, allosterically activated by fructose 1,6-bisphosphate (FBP). Catalyzes the conversion of lactate to pyruvate. The protein is L-lactate dehydrogenase of Streptococcus pyogenes serotype M3 (strain SSI-1).